The chain runs to 2171 residues: MANLGGGAEAHARFKQYEYRANSSLVLTTDNRPRDTHEPTGEPETLWGKIDPRSFGDRVAKGRPQELEDKLKKSKKKERDVVDDMVNIRQSKRRRLREESVLTDTDDAVYQPKTKETRAAYEAMLGLIQKQLGGQPPSIVSGAADEILAVLKNDAFRNPEKKMEIEKLLNKIENHEFDQLVSIGKLITDFQEGGDSGGGRANDDEGLDDDLGVAVEFEENEEDDEESDPDMVEEDDDEEDDEPTRTGGMQVDAGINDEDAGDANEGTNLNVQDIDAYWLQRKISQAYEQQIDPQQCQVLAEELLKILAEGDDRVVEDKLLMHLQYEKFSLVKFLLRNRLKVVWCTRLARAEDQEERNRIEEEMRGLGPELTAIVEQLHATRATAKEREENLQKSINEEARRLKDETGGDGGRGRRDVADRDSESGWVKGQRQMLDLESLAFDQGGLLMANKKCDLPPGSYRSHGKGYDEVHVPWVSKKVDRNEKLVKITEMPDWAQPAFKGMQQLNRVQSKVYDTALFKAENILLCAPTGAGKTNVAMLTILQQLEMNRNTDGTYNHGDYKIVYVAPMKALVAEVVGNLSNRLKDYGVIVRELSGDQSLTGREIEETQIIVTTPEKWDIITRKSGDRTYTQLVRLLIIDEIHLLHDNRGPVLESIVARTLRQIETTKENIRLVGLSATLPNYEDVALFLRVDLKKGLFKFDRSYRPVPLHQQYIGISVKKPLQRFQLMNDLCYQKVLAGAGKHQVLIFVHSRKETSKTARAIRDTAMANDTLSRFLKEDSVTRDVLHSHEDIVKNSDLKDILPYGFAIHHAGLSRGDREIVETLFSQGHVQVLVSTATLAWGVNLPAHTVIIKGTQVYNPEKGAWMELSPLDVMQMLGRAGRPQYDQHGEGIIITGYSELQYYLSLMNEQLPIESQFISKLADQLNAEIVLGTVQNAREACHWLGYTYLYIRMVRNPTLYGLAPDALAKDVVLEERRADLIHSAATILDKNNLVKYDRKSGYFQVTDLGRIASYYYITHGTIATYNEHLKPTMGDIDLYRLFSLSDEFKYVTVRQDEKMELAKLLDRVPIPIKETLEEPSAKINVLLQAYISQLKLEGLSLTSDMVYITQSAGRLVRALYEIVLKRGWAQLAEKALNLSKMVGKRMWSVQTPLRQFHGLSNDILMQLEKKDLVWERYYDLSAQELGELIRSPKMGKPLHKFIHQFPKVTLSAHVQPITRTVLNVELTVTPDFLWDEKIHKYVEPFWIIVEDNDGEKILHHEYFLLKKQYIDEDHTLHFTVPIFEPLPPQYFVRVVSDKWLGSETVLPVSFRHLILPEKYPPPTELLDLQPLPVTALRNPNYEILYQDFKHFNPVQTQVFTVLYNTNDNVLVAAPTGSGKTICAEFAILRNHHEGPDATMRVVYIAPLEAIAKEQFRIWEGKFGKGLGLRVVELTGETALDLKLLEKGQIIISTPEKWDALSRRWKQRKYVQQVSLFIVDELHLIGGQHGPVLEVIVSRMRYISSQVINKIRIVALSTSLANAKDLGEWIGASSHGLFNFPPGVRPVPLEIHIQGVDISSFEARMQAMTKPTYTAIVQHAKNKKPAIVFVPTRKHVRLTAVDLMAYSHMDNPQSPDFLLGKLEELDPFVEQIREETLKETLCHGIGYLHEGLSSLDQEIVTQLFEAGRIQVCVMSSSLCWGTPLTAHLVVVMGTQYYDGRENSHSDYPVPDLLQMMGRASRPLLDNAGKCVIFCHAPRKEYYKKFLYEAFPVESQLQHFLHDNFNAEVVAGVIENKQDAVDYLTWTFMYRRLPQNPNYYNLQGVSHRHLSDHLSELVENTLSDLEASKCIEVEDEMELSPLNLGMIASYYYISYTTIERFSSLLSSKTKMKGLLEILTSASEYDMIPIRPGEEDTVRRLINHQRFSFENPKCTDPHVKANALLQAHFSRQNIGGNLAMDQRDVLLSATRLLQAMVDVISSNGWLNLALLAMEVSQMVTQGMWERDSMLLQLPHFTKDLAKRCQENPGKNIETVFDLVEMEDEERQELLKMSDAQLLDIARFCNRFPNIDLTYEIVGSEEVNPGKEVTLQVMLERDMEGRTEVGPVDSLRYPKTKEEGWWLVVGDTKTNQLLAIKRVSLQRKVKVKLDFTAPSEPGEKSYTLYFMCDSYLGCDQEYSFSVDVKGSGAGDRMEE.

Disordered regions lie at residues 24–80 (SLVL…KERD), 218–267 (EENE…NEGT), and 383–426 (TAKE…ESGW). Composition is skewed to basic and acidic residues over residues 31–40 (NRPRDTHEPT) and 50–80 (IDPR…KERD). Over residues 218 to 242 (EENEEDDEESDPDMVEEDDDEEDDE) the composition is skewed to acidic residues. Over residues 383–423 (TAKEREENLQKSINEEARRLKDETGGDGGRGRRDVADRDSE) the composition is skewed to basic and acidic residues. The 184-residue stretch at 514–697 (DTALFKAENI…FLRVDLKKGL (184 aa)) folds into the Helicase ATP-binding 1 domain. 527–534 (APTGAGKT) provides a ligand contact to ATP. Positions 639-642 (DEIH) match the DEIH box motif. A Helicase C-terminal 1 domain is found at 731 to 941 (LCYQKVLAGA…GTVQNAREAC (211 aa)). In terms of domain architecture, SEC63 1 spans 1006 to 1308 (TDLGRIASYY…WLGSETVLPV (303 aa)). A Helicase ATP-binding 2 domain is found at 1360-1537 (TVLYNTNDNV…WIGASSHGLF (178 aa)). 1373–1380 (APTGSGKT) contributes to the ATP binding site. Residues 1479-1482 (DELH) carry the DELH box motif. One can recognise a Helicase C-terminal 2 domain in the interval 1574 to 1779 (AIVQHAKNKK…GVIENKQDAV (206 aa)). The SEC63 2 domain maps to 1839–2157 (PLNLGMIASY…LGCDQEYSFS (319 aa)).

Belongs to the DExH box helicase family. As to quaternary structure, interacts with CLO.

It is found in the nucleus. It carries out the reaction ATP + H2O = ADP + phosphate + H(+). In terms of biological role, RNA helicase that plays an essential role in pre-mRNA splicing as component of the U5 snRNP and U4/U6-U5 tri-snRNP complexes. Involved in spliceosome assembly, activation and disassembly. The polypeptide is DExH-box ATP-dependent RNA helicase DExH12 (Arabidopsis thaliana (Mouse-ear cress)).